A 164-amino-acid polypeptide reads, in one-letter code: V-type proton ATPase subunit c' (164 aa).

Residues Met-1–Pro-15 lie on the Lumenal side of the membrane. A helical transmembrane segment spans residues Phe-16–Gly-36. At Thr-37 to Ser-58 the chain is on the cytoplasmic side. Residues Leu-59–Val-79 form a helical membrane-spanning segment. At Ala-80–His-97 the chain is on the lumenal side. The chain crosses the membrane as a helical span at residues Leu-98 to Val-118. The Cytoplasmic segment spans residues Gly-119–Gly-135. The chain crosses the membrane as a helical span at residues Ile-136–Ile-156. Residues Leu-157–Asn-164 lie on the Lumenal side of the membrane.

The protein belongs to the V-ATPase proteolipid subunit family. As to quaternary structure, V-ATPase is a heteromultimeric enzyme composed of a peripheral catalytic V1 complex (components A to H) attached to an integral membrane V0 proton pore complex (components: a, c, c', c'', d, e, f and VOA1). The decameric c-ring forms the proton-conducting pore, and is composed of eight proteolipid subunits c, one subunit c' and one subunit c''.

It localises to the vacuole membrane. Proton-conducting pore forming subunit of the V0 complex of vacuolar(H+)-ATPase (V-ATPase), a multisubunit enzyme composed of a peripheral complex (V1) that hydrolyzes ATP and a membrane integral complex (V0) that translocates protons. V-ATPase is responsible for acidifying and maintaining the pH of intracellular compartments. The protein is V-type proton ATPase subunit c' (VMA11) of Eremothecium gossypii (strain ATCC 10895 / CBS 109.51 / FGSC 9923 / NRRL Y-1056) (Yeast).